We begin with the raw amino-acid sequence, 200 residues long: Probable DNA-directed RNA polymerase subunit delta (200 aa).

In terms of domain architecture, HTH HARE-type spans 19 to 88; the sequence is LSMIEVARAI…GDNKWGLRSW (70 aa). Composition is skewed to acidic residues over residues 125 to 143 and 150 to 200; these read DSDAIDYNADDPEDEDAYE and YDDE…TSEE. The disordered stretch occupies residues 125-200; that stretch reads DSDAIDYNAD…SDDDAETSEE (76 aa).

This sequence belongs to the RpoE family. In terms of assembly, RNAP is composed of a core of 2 alpha, a beta and a beta' subunits. The core is associated with a delta subunit and one of several sigma factors.

In terms of biological role, participates in both the initiation and recycling phases of transcription. In the presence of the delta subunit, RNAP displays an increased specificity of transcription, a decreased affinity for nucleic acids, and an increased efficiency of RNA synthesis because of enhanced recycling. This chain is Probable DNA-directed RNA polymerase subunit delta, found in Streptococcus pneumoniae serotype 4 (strain ATCC BAA-334 / TIGR4).